The following is a 261-amino-acid chain: Glucose 1-dehydrogenase A (261 aa).

11–35 (VITGGSTGLGRAMAVRFGQEEAKVV) contacts NADP(+). Residue Ser-145 coordinates substrate. Tyr-158 serves as the catalytic Proton acceptor.

This sequence belongs to the short-chain dehydrogenases/reductases (SDR) family. As to quaternary structure, homotetramer.

The catalysed reaction is D-glucose + NAD(+) = D-glucono-1,5-lactone + NADH + H(+). The enzyme catalyses D-glucose + NADP(+) = D-glucono-1,5-lactone + NADPH + H(+). The polypeptide is Glucose 1-dehydrogenase A (gdhA) (Priestia megaterium (Bacillus megaterium)).